The sequence spans 448 residues: UDP-N-acetylmuramoylalanine--D-glutamate ligase (448 aa).

Position 112-118 (112-118 (GSNAKST)) interacts with ATP.

This sequence belongs to the MurCDEF family.

The protein localises to the cytoplasm. The enzyme catalyses UDP-N-acetyl-alpha-D-muramoyl-L-alanine + D-glutamate + ATP = UDP-N-acetyl-alpha-D-muramoyl-L-alanyl-D-glutamate + ADP + phosphate + H(+). It participates in cell wall biogenesis; peptidoglycan biosynthesis. Its function is as follows. Cell wall formation. Catalyzes the addition of glutamate to the nucleotide precursor UDP-N-acetylmuramoyl-L-alanine (UMA). This is UDP-N-acetylmuramoylalanine--D-glutamate ligase from Acinetobacter baylyi (strain ATCC 33305 / BD413 / ADP1).